The sequence spans 325 residues: Xylosidase/arabinosidase (325 aa).

Aspartate 16 acts as the Proton acceptor in catalysis. Glutamate 224 (proton donor) is an active-site residue.

This sequence belongs to the glycosyl hydrolase 43 family.

The catalysed reaction is Hydrolysis of (1-&gt;4)-beta-D-xylans, to remove successive D-xylose residues from the non-reducing termini.. It catalyses the reaction Hydrolysis of terminal non-reducing alpha-L-arabinofuranoside residues in alpha-L-arabinosides.. The sequence is that of Xylosidase/arabinosidase (xsa) from Bacteroides ovatus.